Consider the following 397-residue polypeptide: MGCIKVISVFLAAIAAVDARAFFHNRGGSDVIPNSYIVVMKDGVTTEDFDSHISTVAATHNLNKAKRGSETVGHKDSFNINGWRAYNGHFDEATIESILNDDKVNYVEHDRVVKLAALVTQPNAPTWGLGRVSHRAPGNRDFVYDSSAGQGITIYGVDTGIDIRHPEFAGRIRWGTNTVDNDNTDGNGHGTHTAGTFAGTTYGVAKKANIVAVKVLSAGGSGSTAGVIKGIDWCVTDARSRNALGKAALNLSLGGSFSQANNDAVTRAQEAGIFVAVAAGNDNRDARNYSPASAPAVCTAASSTIDDQKSSFSNWGSIVDIYAPGSSILSAAPGGGTRTLSGTSMASPHVCGVGAAMLAQGVSVAQVCNRLKQIGNAVIRNPGTSTTNRLLYNGSGQ.

The first 19 residues, 1-19 (MGCIKVISVFLAAIAAVDA), serve as a signal peptide directing secretion. A propeptide spanning residues 20–116 (RAFFHNRGGS…VEHDRVVKLA (97 aa)) is cleaved from the precursor. In terms of domain architecture, Inhibitor I9 spans 35 to 116 (SYIVVMKDGV…VEHDRVVKLA (82 aa)). A Peptidase S8 domain is found at 126 to 397 (TWGLGRVSHR…NRLLYNGSGQ (272 aa)). Active-site charge relay system residues include D158 and H189. The N-linked (GlcNAc...) asparagine glycan is linked to N250. The active-site Charge relay system is S344. Residue N393 is glycosylated (N-linked (GlcNAc...) asparagine).

This sequence belongs to the peptidase S8 family.

Its subcellular location is the secreted. In terms of biological role, secreted subtilisin-like serine protease with keratinolytic activity that contributes to pathogenicity. The protein is Subtilisin-like protease 3 (SUB3) of Trichophyton equinum (Horse ringworm fungus).